Here is a 145-residue protein sequence, read N- to C-terminus: Monooxygenase AacuP (145 aa).

This sequence belongs to the avfA family.

It functions in the pathway secondary metabolite biosynthesis. In terms of biological role, monooxygenase; part of the gene cluster that mediates the biosynthesis of the tetrahydroxanthone dimer secalonic acid D. The pathway begins with the synthesis of atrochrysone thioester by the polyketide synthase AacuL. The atrochrysone carboxyl ACP thioesterase AacuM then breaks the thioester bond and releases the atrochrysone carboxylic acid from AacuL. Atrochrysone carboxylic acid is decarboxylated by the decarboxylase AacuI, and oxidized by the anthrone oxygenase AacuG to yield emodin. Emodin is then reduced to emodin hydroquinone by a yet unidentified oxidoreductase. A-ring reduction by the short chain dehydrogenase AacuN, dehydration by the scytalone dehydratase-like protein AacuK and probable spontaneous re-oxidation, results in overall deoxygenation to chrysophanol. Baeyer-Villiger oxidation by the Baeyer-Villiger monooxygenase (BVMO) AacuH then yields monodictyphenone. Monodictyphenone is transformed into compounds with the tetrahydroxanthone skeleton via methylesterification by the methyltransferase AacuQ, followed by the action of the flavin-dependent monooxygenase AacuC, the isomerase AacuP, and the short chain dehydrogenase/reductase AacuF or AacuD. AacuF and AacuD should accept the same compound as a substrate but perform the ketoreduction with a different stereoselectivity, thus yielding blennolides B and A, respectively. In the final step of the biosynthesis, the cytochrome P450 monooxygenase AacuE accepts blennolide B and/or blennolide A to conduct the dimerization reaction to furnish the tetrahydroxanthone dimers, secalonic acids D, B, and F. In Aspergillus aculeatus (strain ATCC 16872 / CBS 172.66 / WB 5094), this protein is Monooxygenase AacuP.